A 61-amino-acid polypeptide reads, in one-letter code: Metallothionein-1C (61 aa).

Positions 1 to 29 (MDPNCSCSTGGSCSCAGSCTCKACRCTSC) are beta. Residues Cys-5, Cys-7, Cys-13, Cys-15, Cys-19, Cys-21, Cys-24, Cys-26, Cys-29, Cys-33, Cys-34, Cys-36, Cys-37, Cys-41, Cys-44, Cys-48, Cys-50, Cys-57, Cys-59, and Cys-60 each coordinate a divalent metal cation. Residues 30–61 (KKSCCSCCPAGCARCAQGCICKGASDKCSCCA) form an alpha region.

The protein belongs to the metallothionein superfamily. Type 1 family. As to quaternary structure, monomer.

Its function is as follows. Metallothioneins have a high content of cysteine residues that bind various heavy metals; these proteins are transcriptionally regulated by both heavy metals and glucocorticoids. In Sus scrofa (Pig), this protein is Metallothionein-1C (MT1C).